Consider the following 460-residue polypeptide: Cysteine--tRNA ligase (460 aa).

Cys28 is a binding site for Zn(2+). A 'HIGH' region motif is present at residues 30–40 (MTVYDYCHLGH). Cys209, His234, and Glu238 together coordinate Zn(2+). Residues 266–270 (KMSKS) carry the 'KMSKS' region motif. Position 269 (Lys269) interacts with ATP.

Belongs to the class-I aminoacyl-tRNA synthetase family. In terms of assembly, monomer. The cofactor is Zn(2+).

It localises to the cytoplasm. The enzyme catalyses tRNA(Cys) + L-cysteine + ATP = L-cysteinyl-tRNA(Cys) + AMP + diphosphate. The sequence is that of Cysteine--tRNA ligase from Pseudomonas aeruginosa (strain LESB58).